The primary structure comprises 126 residues: Protein C10 (126 aa).

Ala-2 carries the post-translational modification N-acetylalanine.

Belongs to the UPF0456 family. As to expression, ubiquitously expressed, with higher expression in lung and fetal brain.

The protein resides in the cytoplasm. In brain, may be required for corpus callosum development. This is Protein C10 (C12orf57) from Homo sapiens (Human).